The chain runs to 185 residues: Ribosome-recycling factor (185 aa).

Residues 141–160 form a disordered region; sequence RIQKDGEAGEDEVGRAEKEL.

It belongs to the RRF family.

The protein localises to the cytoplasm. Responsible for the release of ribosomes from messenger RNA at the termination of protein biosynthesis. May increase the efficiency of translation by recycling ribosomes from one round of translation to another. The polypeptide is Ribosome-recycling factor (Rhodococcus jostii (strain RHA1)).